Consider the following 352-residue polypeptide: Ion-translocating oxidoreductase complex subunit D (352 aa).

The next 4 helical transmembrane spans lie at 20–40 (IMLLVLLAAVPGIAAQLCFFG), 42–62 (GTLVQILLASVSALLAEALVL), 89–109 (IPPLAPWWMVVLGTVFAVIIA), and 123–143 (PAMIGYVVLLISFPVQMTSWL). Position 187 is an FMN phosphoryl threonine (Thr-187). Transmembrane regions (helical) follow at residues 215-235 (LAGAGWQWVNLAWLAGGVWLL), 242-262 (WHIPLSFLVTLALCATLGWLF), 267-287 (LAAPQIHLLSGATMLGAFFIL), 301-321 (LIFGALAGLLVWLIRSFGGYP), and 322-342 (DGVAFAVLLANITVPLIDYYT).

It belongs to the NqrB/RnfD family. As to quaternary structure, the complex is composed of six subunits: RsxA, RsxB, RsxC, RsxD, RsxE and RsxG. Requires FMN as cofactor.

It localises to the cell inner membrane. Part of a membrane-bound complex that couples electron transfer with translocation of ions across the membrane. Required to maintain the reduced state of SoxR. This Escherichia coli O7:K1 (strain IAI39 / ExPEC) protein is Ion-translocating oxidoreductase complex subunit D.